A 384-amino-acid chain; its full sequence is Carbamoyl phosphate synthase small chain (384 aa).

A CPSase region spans residues 1–192 (MMKRIPAILV…LTDNIRVHRV (192 aa)). The L-glutamine site is built by serine 51, glycine 244, and glycine 246. A Glutamine amidotransferase type-1 domain is found at 196-382 (KVIVIDFGVK…IEIMTKSKNK (187 aa)). The active-site Nucleophile is cysteine 272. L-glutamine-binding residues include methionine 273, glutamine 276, asparagine 312, glycine 314, and phenylalanine 315. Residues histidine 355 and glutamate 357 contribute to the active site.

This sequence belongs to the CarA family. Composed of two chains; the small (or glutamine) chain promotes the hydrolysis of glutamine to ammonia, which is used by the large (or ammonia) chain to synthesize carbamoyl phosphate. Tetramer of heterodimers (alpha,beta)4.

The protein resides in the plastid. The protein localises to the chloroplast. The enzyme catalyses hydrogencarbonate + L-glutamine + 2 ATP + H2O = carbamoyl phosphate + L-glutamate + 2 ADP + phosphate + 2 H(+). The catalysed reaction is L-glutamine + H2O = L-glutamate + NH4(+). Its pathway is amino-acid biosynthesis; L-arginine biosynthesis; carbamoyl phosphate from bicarbonate: step 1/1. It functions in the pathway pyrimidine metabolism; UMP biosynthesis via de novo pathway; (S)-dihydroorotate from bicarbonate: step 1/3. Its function is as follows. Small subunit of the glutamine-dependent carbamoyl phosphate synthetase (CPSase). CPSase catalyzes the formation of carbamoyl phosphate from the ammonia moiety of glutamine, carbonate, and phosphate donated by ATP, constituting the first step of 2 biosynthetic pathways, one leading to arginine and/or urea and the other to pyrimidine nucleotides. The small subunit (glutamine amidotransferase) binds and cleaves glutamine to supply the large subunit with the substrate ammonia. This is Carbamoyl phosphate synthase small chain from Pyropia yezoensis (Susabi-nori).